Consider the following 255-residue polypeptide: MRGVFIAGVIAAFAITVVDSLNCTQCYTYNSTCDGQATECNEQSFSCVESSINSTLGGFLHVYQNKFCSASNCTENSTEVAFTVHLFDDQRYHFASQCCQGESCNATHSESGTQNVTDMQCMSCYGHNKTLCEEKPQKCYEGEQCVFIIAEMVNGSGRVELKGCSDISNSTCQFLSPGNTTVGEFVFKSVECTQPTEYTNSTTTIPPITNTSLTSVTRPGIKTSPASVTPQASMGTKASFTSSIFGSLLLLKLLF.

The N-terminal stretch at 1–20 is a signal peptide; that stretch reads MRGVFIAGVIAAFAITVVDS. Residues N22, N30, N53, N72, N76, N105, N115, N128, N154, N169, N179, N200, and N210 are each glycosylated (N-linked (GlcNAc...) asparagine). Residues 121-170 form the UPAR/Ly6 domain; sequence CMSCYGHNKTLCEEKPQKCYEGEQCVFIIAEMVNGSGRVELKGCSDISNS. A lipid anchor (GPI-anchor amidated serine) is attached at S233. A propeptide spans 234-255 (removed in mature form); it reads MGTKASFTSSIFGSLLLLKLLF.

Belongs to the CNF-like-inhibitor family. Post-translationally, highly N-glycosylated. Not O-glycosylated. In terms of processing, GPI-anchored. The GPI-anchor is cleaved, leading to secretion into the colonic lumen. Specifically present in enterocytes located at the uppermost epithelial layer of the colon (at protein level). Exclusively expressed in the large intestine: specifically expressed on the apical surface of epithelial cells located at the uppermost layer of the colonic gland.

The protein localises to the cell membrane. It is found in the secreted. Functionally, secreted protein specifically required to prevent invasion of Gram-negative bacteria in the inner mucus layer of the colon epithelium, a portion of the large intestine which is free of commensal microbiota. Prevents invasion of flagellated microbiota by binding to the flagellum of bacteria, such as P.mirabilis, thereby inhibiting bacterial motility in the intestinal lumen. Segregation of intestinal bacteria and epithelial cells in the colon is required to preserve intestinal homeostasis. The chain is Ly6/PLAUR domain-containing protein 8 from Mus musculus (Mouse).